A 129-amino-acid polypeptide reads, in one-letter code: Type II secretion system protein I (129 aa).

Residues Met-1–Gly-6 constitute a propeptide, leader sequence. Position 7 is an N-methylphenylalanine (Phe-7). The chain crosses the membrane as a helical span at residues Phe-7–Leu-27.

Belongs to the GSP I family. As to quaternary structure, type II secretion is composed of four main components: the outer membrane complex, the inner membrane complex, the cytoplasmic secretion ATPase and the periplasm-spanning pseudopilus. Forms the tip of the type II pseudopilus by interacting with XcpU, XcpW and XcpX. Interacts with core component XcpT. In terms of processing, cleaved by prepilin peptidase. Post-translationally, methylated by prepilin peptidase at the amino group of the N-terminal phenylalanine once the leader sequence is cleaved by prepilin peptidase.

The protein resides in the cell inner membrane. Functionally, component of the type II secretion system required for the energy-dependent secretion of extracellular factors such as proteases and toxins from the periplasm. Part of the pseudopilus tip complex that is critical for the recognition and binding of secretion substrates. Type II pseudopilus confers increased bacterial adhesive capabilities. This chain is Type II secretion system protein I (xcpV), found in Pseudomonas aeruginosa (strain ATCC 15692 / DSM 22644 / CIP 104116 / JCM 14847 / LMG 12228 / 1C / PRS 101 / PAO1).